Reading from the N-terminus, the 139-residue chain is Putative pre-16S rRNA nuclease (139 aa).

The protein belongs to the YqgF nuclease family.

Its subcellular location is the cytoplasm. Functionally, could be a nuclease involved in processing of the 5'-end of pre-16S rRNA. This chain is Putative pre-16S rRNA nuclease, found in Phocaeicola vulgatus (strain ATCC 8482 / DSM 1447 / JCM 5826 / CCUG 4940 / NBRC 14291 / NCTC 11154) (Bacteroides vulgatus).